A 233-amino-acid chain; its full sequence is Octanoyltransferase (233 aa).

Residues 38–218 form the BPL/LPL catalytic domain; sequence AGGPDTLLLL…AVCDALDGVL (181 aa). The span at 57–66 shows a compositional bias: basic and acidic residues; sequence RRTEPHERPL. The segment at 57-77 is disordered; the sequence is RRTEPHERPLDGTPVVDTDRG. Substrate-binding positions include 76 to 83, 148 to 150, and 161 to 163; these read RGGKITWH, AIG, and GFA. Catalysis depends on Cys-179, which acts as the Acyl-thioester intermediate.

The protein belongs to the LipB family.

Its subcellular location is the cytoplasm. The catalysed reaction is octanoyl-[ACP] + L-lysyl-[protein] = N(6)-octanoyl-L-lysyl-[protein] + holo-[ACP] + H(+). The protein operates within protein modification; protein lipoylation via endogenous pathway; protein N(6)-(lipoyl)lysine from octanoyl-[acyl-carrier-protein]: step 1/2. Functionally, catalyzes the transfer of endogenously produced octanoic acid from octanoyl-acyl-carrier-protein onto the lipoyl domains of lipoate-dependent enzymes. Lipoyl-ACP can also act as a substrate although octanoyl-ACP is likely to be the physiological substrate. This chain is Octanoyltransferase, found in Mycolicibacterium paratuberculosis (strain ATCC BAA-968 / K-10) (Mycobacterium paratuberculosis).